Here is a 227-residue protein sequence, read N- to C-terminus: Leucyl/phenylalanyl-tRNA--protein transferase (227 aa).

This sequence belongs to the L/F-transferase family.

It is found in the cytoplasm. It catalyses the reaction N-terminal L-lysyl-[protein] + L-leucyl-tRNA(Leu) = N-terminal L-leucyl-L-lysyl-[protein] + tRNA(Leu) + H(+). The catalysed reaction is N-terminal L-arginyl-[protein] + L-leucyl-tRNA(Leu) = N-terminal L-leucyl-L-arginyl-[protein] + tRNA(Leu) + H(+). The enzyme catalyses L-phenylalanyl-tRNA(Phe) + an N-terminal L-alpha-aminoacyl-[protein] = an N-terminal L-phenylalanyl-L-alpha-aminoacyl-[protein] + tRNA(Phe). In terms of biological role, functions in the N-end rule pathway of protein degradation where it conjugates Leu, Phe and, less efficiently, Met from aminoacyl-tRNAs to the N-termini of proteins containing an N-terminal arginine or lysine. The sequence is that of Leucyl/phenylalanyl-tRNA--protein transferase from Afipia carboxidovorans (strain ATCC 49405 / DSM 1227 / KCTC 32145 / OM5) (Oligotropha carboxidovorans).